A 699-amino-acid chain; its full sequence is Nucleolar and coiled-body phosphoprotein 1 (699 aa).

Positions 10–42 (VPSDLYPLVLGFLRDNQLSEVANKFAKATGATQ) constitute a LisH domain. The residue at position 33 (Lys-33) is an N6-acetyllysine. The interval 65–637 (ERKLQANGPV…VREEEIEVDS (573 aa)) is disordered. Glycyl lysine isopeptide (Lys-Gly) (interchain with G-Cter in SUMO2) cross-links involve residues Lys-67 and Lys-76. The Acidic serine cluster 1 repeat unit spans residues 84 to 95 (SSDSEDSSEEEE). The 11 X 12 AA approximate repeats of an acidic serine cluster stretch occupies residues 84–566 (SSDSEDSSEE…GKAAKNSEEE (483 aa)). The span at 86–97 (DSEDSSEEEEEV) shows a compositional bias: acidic residues. Phosphoserine occurs at positions 87, 90, and 91. Diphosphoserine is present on Ser-91. Positions 100-110 (PPAKKAAVPAK) are enriched in low complexity. The stretch at 125–136 (ESSSSEESSDDD) is one Acidic serine cluster 2 repeat. Residues 144 to 159 (QPVQKGVKPQAKAAKA) are compositionally biased toward low complexity. One copy of the Acidic serine cluster 3 repeat lies at 167–178 (SDSDSDSSSEDE). A Glycyl lysine isopeptide (Lys-Gly) (interchain with G-Cter in SUMO2) cross-link involves residue Lys-186. At Thr-188 the chain carries Phosphothreonine. A Glycyl lysine isopeptide (Lys-Gly) (interchain with G-Cter in SUMO2) cross-link involves residue Lys-193. 2 stretches are compositionally biased toward low complexity: residues 193 to 227 (KAQT…SSSS) and 236 to 261 (AATP…TTPT). Residues 204–382 (RAAPKIANGK…DDEAPSKPAG (179 aa)) form an interaction with RPA194 region. One copy of the Acidic serine cluster 4 repeat lies at 221-232 (SSSSSSSDDSEE). The Acidic serine cluster 5 repeat unit spans residues 264–275 (SSSSEDSSSDEE). A compositionally biased stretch (pro residues) spans 291 to 301 (SVPPPSAPPPK). Positions 321–333 (SSEDSSDESDSSS) are enriched in acidic residues. An Acidic serine cluster 6 repeat occupies 325–336 (SSDESDSSSEEE). Glycyl lysine isopeptide (Lys-Gly) (interchain with G-Cter in SUMO2) cross-links involve residues Lys-342 and Lys-347. Residues Ser-362, Ser-363, and Ser-366 each carry the phosphoserine modification. An Acidic serine cluster 7 repeat occupies 363–375 (SDSSDSDSSEDDE). A compositionally biased stretch (acidic residues) spans 366–375 (SDSDSSEDDE). Residues 381-397 (AGTTKNSSNKPAVTTKS) show a composition bias toward polar residues. Glycyl lysine isopeptide (Lys-Gly) (interchain with G-Cter in SUMO2) cross-links involve residues Lys-390 and Lys-396. A Phosphoserine modification is found at Ser-397. Low complexity predominate over residues 398–409 (PAVKPAAAPKQP). Glycyl lysine isopeptide (Lys-Gly) (interchain with G-Cter in SUMO2) cross-links involve residues Lys-401 and Lys-407. Lys-415 carries the N6-acetyllysine; alternate modification. Lys-415 participates in a covalent cross-link: Glycyl lysine isopeptide (Lys-Gly) (interchain with G-Cter in SUMO1); alternate. Lys-415 participates in a covalent cross-link: Glycyl lysine isopeptide (Lys-Gly) (interchain with G-Cter in SUMO2); alternate. An Acidic serine cluster 8 repeat occupies 425–436 (SSEEESSSSEEE). Glycyl lysine isopeptide (Lys-Gly) (interchain with G-Cter in SUMO2) cross-links involve residues Lys-440 and Lys-452. 2 stretches are compositionally biased toward low complexity: residues 441 to 476 (MVAT…SDSS) and 498 to 523 (AGGA…SSSD). Ser-456 carries the phosphoserine modification. Residues 470 to 481 (SSDSDSSSSEEE) form an Acidic serine cluster 9 repeat. Lys-505 is covalently cross-linked (Glycyl lysine isopeptide (Lys-Gly) (interchain with G-Cter in SUMO2)). Phosphoserine is present on Ser-508. The Acidic serine cluster 10 repeat unit spans residues 519–529 (SSSSDDSSEEE). At Ser-538 the chain carries Phosphoserine. Residues 547-556 (NGTSALTAQN) are compositionally biased toward polar residues. The Acidic serine cluster 11 repeat unit spans residues 555-566 (QNGKAAKNSEEE). The residue at position 563 (Ser-563) is a Phosphoserine. Lys-572 participates in a covalent cross-link: Glycyl lysine isopeptide (Lys-Gly) (interchain with G-Cter in SUMO1). A Glycyl lysine isopeptide (Lys-Gly) (interchain with G-Cter in SUMO2) cross-link involves residue Lys-579. A phosphoserine mark is found at Ser-580 and Ser-582. Residue Lys-604 forms a Glycyl lysine isopeptide (Lys-Gly) (interchain with G-Cter in SUMO2) linkage. Phosphothreonine is present on residues Thr-607 and Thr-610. Residue Lys-613 forms a Glycyl lysine isopeptide (Lys-Gly) (interchain with G-Cter in SUMO2) linkage. Ser-622 carries the phosphoserine modification. Positions 627–637 (RVREEEIEVDS) are enriched in basic and acidic residues. The residue at position 643 (Ser-643) is a Phosphoserine. A Glycyl lysine isopeptide (Lys-Gly) (interchain with G-Cter in SUMO2) cross-link involves residue Lys-647. N6-acetyllysine; alternate is present on Lys-663. Lys-663 is covalently cross-linked (Glycyl lysine isopeptide (Lys-Gly) (interchain with G-Cter in SUMO2); alternate). Arg-683 is subject to Omega-N-methylarginine. Ser-686 carries the phosphoserine modification. A Glycyl lysine isopeptide (Lys-Gly) (interchain with G-Cter in SUMO2) cross-link involves residue Lys-695. Residue Ser-698 is modified to Phosphoserine.

It belongs to the NOLC1 family. Heterodimer; heterodimerizes with TCOF1 following monoubiquitination. Interacts with RNA polymerase I 194 kDa subunit (RPA194) and with casein kinase-II. Interacts with DKC1/NAP57, NOP58 and fibrillarin. Undergoes rapid and massive phosphorylation/dephosphorylation cycles on CK2 and PKC sites. NOLC1 is one of the mostly phosphorylated proteins in the cell. In terms of processing, ubiquitinated. Monoubiquitination by the BCR(KBTBD8) complex promotes the formation of a NOLC1-TCOF1 complex that acts as a platform to connect RNA polymerase I with enzymes responsible for ribosomal processing and modification, leading to remodel the translational program of differentiating cells in favor of neural crest specification. Post-translationally, pyrophosphorylated by 5-diphosphoinositol pentakisphosphate (5-IP7). Serine pyrophosphorylation is achieved by Mg(2+)-dependent, but enzyme independent transfer of a beta-phosphate from a inositol pyrophosphate to a pre-phosphorylated serine residue.

Its subcellular location is the nucleus. It is found in the nucleolus. The protein localises to the cytoplasm. Functionally, nucleolar protein that acts as a regulator of RNA polymerase I by connecting RNA polymerase I with enzymes responsible for ribosomal processing and modification. Required for neural crest specification: following monoubiquitination by the BCR(KBTBD8) complex, associates with TCOF1 and acts as a platform to connect RNA polymerase I with enzymes responsible for ribosomal processing and modification, leading to remodel the translational program of differentiating cells in favor of neural crest specification. Involved in nucleologenesis, possibly by playing a role in the maintenance of the fundamental structure of the fibrillar center and dense fibrillar component in the nucleolus. It has intrinsic GTPase and ATPase activities. In Homo sapiens (Human), this protein is Nucleolar and coiled-body phosphoprotein 1.